We begin with the raw amino-acid sequence, 262 residues long: Tropinone reductase homolog At2g29310 (262 aa).

13 to 37 is an NADP(+) binding site; it reads LVTGAASGIGYAIVEELASFGAIIH. Substrate is bound at residue serine 146. Catalysis depends on tyrosine 159, which acts as the Proton acceptor.

The protein belongs to the short-chain dehydrogenases/reductases (SDR) family. SDR65C subfamily.

The sequence is that of Tropinone reductase homolog At2g29310 from Arabidopsis thaliana (Mouse-ear cress).